The primary structure comprises 252 residues: Small ribosomal subunit protein uS2 (252 aa).

This sequence belongs to the universal ribosomal protein uS2 family.

In Alcanivorax borkumensis (strain ATCC 700651 / DSM 11573 / NCIMB 13689 / SK2), this protein is Small ribosomal subunit protein uS2.